The primary structure comprises 141 residues: Nucleoside diphosphate kinase (141 aa).

Positions 11, 59, 87, 93, 104, and 114 each coordinate ATP. H117 (pros-phosphohistidine intermediate) is an active-site residue.

This sequence belongs to the NDK family. In terms of assembly, homotetramer. Mg(2+) serves as cofactor.

It localises to the cytoplasm. The enzyme catalyses a 2'-deoxyribonucleoside 5'-diphosphate + ATP = a 2'-deoxyribonucleoside 5'-triphosphate + ADP. It carries out the reaction a ribonucleoside 5'-diphosphate + ATP = a ribonucleoside 5'-triphosphate + ADP. Major role in the synthesis of nucleoside triphosphates other than ATP. The ATP gamma phosphate is transferred to the NDP beta phosphate via a ping-pong mechanism, using a phosphorylated active-site intermediate. This is Nucleoside diphosphate kinase from Halorhodospira halophila (strain DSM 244 / SL1) (Ectothiorhodospira halophila (strain DSM 244 / SL1)).